A 291-amino-acid polypeptide reads, in one-letter code: Elongation factor Ts (291 aa).

The tract at residues 79 to 82 (TDFV) is involved in Mg(2+) ion dislocation from EF-Tu.

Belongs to the EF-Ts family.

The protein resides in the cytoplasm. Its function is as follows. Associates with the EF-Tu.GDP complex and induces the exchange of GDP to GTP. It remains bound to the aminoacyl-tRNA.EF-Tu.GTP complex up to the GTP hydrolysis stage on the ribosome. This chain is Elongation factor Ts, found in Jannaschia sp. (strain CCS1).